The chain runs to 1420 residues: Apolipoprotein(a) (1420 aa).

Low complexity predominate over residues 19–30 (TAVAPPNVTPVP). The segment at 19–46 (TAVAPPNVTPVPSLEAPSEQAPTEQRPG) is disordered. Kringle domains are found at residues 49–127 (ECYH…LTQC), 163–241 (ECYH…LTQC), 277–355 (ECYH…LTQC), 391–469 (ECYH…LTRC), and 505–583 (ECYY…LTQC). 15 disulfides stabilise this stretch: C50–C127, C71–C110, C99–C122, C164–C241, C185–C224, C213–C236, C278–C355, C299–C338, C327–C350, C392–C469, C413–C452, C441–C464, C506–C583, C527–C566, and C555–C578. A disordered region spans residues 598-617 (PDPSTQASSEEAPTEQSPEV). Positions 600–616 (PSTQASSEEAPTEQSPE) are enriched in polar residues. 5 Kringle domains span residues 619-697 (DCYH…LTQC), 725-803 (DCYH…LTQC), 839-917 (DCYQ…LTQC), 953-1031 (DCYH…LTQC), and 1067-1145 (QCYH…LTRC). 19 disulfide bridges follow: C620–C697, C641–C680, C669–C692, C726–C803, C747–C786, C775–C798, C840–C917, C861–C900, C889–C912, C954–C1031, C975–C1014, C1003–C1026, C1068–C1145, C1089–C1128, C1117–C1140, C1217–C1233, C1309–C1376, C1339–C1355, and C1366–C1394. A Peptidase S1 domain is found at 1191–1418 (IVGGCVAHPH…FVTWIEGVMR (228 aa)).

This sequence belongs to the peptidase S1 family. Plasminogen subfamily. In terms of assembly, disulfide-linked to apo-B100. Binds to fibronectin and decorin. In terms of processing, N- and O-glycosylated.

Its function is as follows. Apo(a) is the main constituent of lipoprotein(a) (Lp(a)). It has serine proteinase activity and is able of autoproteolysis. Inhibits tissue-type plasminogen activator 1. Lp(a) may be a ligand for megalin/Gp 330. The chain is Apolipoprotein(a) (LPA) from Macaca mulatta (Rhesus macaque).